The following is a 601-amino-acid chain: Glutathione-regulated potassium-efflux system protein KefB (601 aa).

The next 13 helical transmembrane spans lie at 5–25 (DLLLAGILFLFAAVVAVPIAA), 29–49 (IGAVLGYLLAGIAIGPWGLGF), 55–75 (EILHFSELGVVFLMFLIGLEL), 87–107 (IFGIGAAQVLLSAVVLAGLLM), 115–135 (AAVVGGIGLAMSSTAMALQLM), 152–172 (VLLFQDLAVIPALAMVPLLAG), 181–201 (LKIGMKVLAFAVMLVGGRYLL), 207–227 (FIAGSGVREVFTAAALLLVLG), 230–250 (LFMDLLGLSMALGTFIAGILL), 268–288 (GLLLGLFFISVGMALNLGVLY), 291–311 (ILWVVMSVVVLVSVKMAVLYG), 324–344 (LPFAGVLSQGGEFAFVLFSSA), and 356–376 (ALLLVTVTLSMMTTPLVMKGI). The region spanning 400-519 (KPQVIIVGFG…AGVKQFSRET (120 aa)) is the RCK N-terminal domain.

Belongs to the monovalent cation:proton antiporter 2 (CPA2) transporter (TC 2.A.37) family. KefB subfamily. As to quaternary structure, interacts with the regulatory subunit KefG.

It is found in the cell inner membrane. Functionally, pore-forming subunit of a potassium efflux system that confers protection against electrophiles. Catalyzes K(+)/H(+) antiport. The protein is Glutathione-regulated potassium-efflux system protein KefB of Cronobacter sakazakii (strain ATCC BAA-894) (Enterobacter sakazakii).